The following is a 180-amino-acid chain: Large ribosomal subunit protein uL5 (180 aa).

Belongs to the universal ribosomal protein uL5 family. Part of the 50S ribosomal subunit; part of the 5S rRNA/L5/L18/L25 subcomplex. Contacts the 5S rRNA and the P site tRNA. Forms a bridge to the 30S subunit in the 70S ribosome.

This is one of the proteins that bind and probably mediate the attachment of the 5S RNA into the large ribosomal subunit, where it forms part of the central protuberance. In the 70S ribosome it contacts protein S13 of the 30S subunit (bridge B1b), connecting the 2 subunits; this bridge is implicated in subunit movement. Contacts the P site tRNA; the 5S rRNA and some of its associated proteins might help stabilize positioning of ribosome-bound tRNAs. The chain is Large ribosomal subunit protein uL5 from Streptococcus pyogenes serotype M1.